Here is a 311-residue protein sequence, read N- to C-terminus: 4-diphosphocytidyl-2-C-methyl-D-erythritol kinase (311 aa).

Residue Lys10 is part of the active site. ATP is bound at residue 105 to 115; the sequence is PVAGGMAGGSA. The active site involves Asp146.

This sequence belongs to the GHMP kinase family. IspE subfamily.

It carries out the reaction 4-CDP-2-C-methyl-D-erythritol + ATP = 4-CDP-2-C-methyl-D-erythritol 2-phosphate + ADP + H(+). The protein operates within isoprenoid biosynthesis; isopentenyl diphosphate biosynthesis via DXP pathway; isopentenyl diphosphate from 1-deoxy-D-xylulose 5-phosphate: step 3/6. Catalyzes the phosphorylation of the position 2 hydroxy group of 4-diphosphocytidyl-2C-methyl-D-erythritol. This chain is 4-diphosphocytidyl-2-C-methyl-D-erythritol kinase, found in Corynebacterium glutamicum (strain ATCC 13032 / DSM 20300 / JCM 1318 / BCRC 11384 / CCUG 27702 / LMG 3730 / NBRC 12168 / NCIMB 10025 / NRRL B-2784 / 534).